The sequence spans 529 residues: BAR/IMD domain-containing adapter protein 2-like 2 (529 aa).

Residues 1-239 (MAPEMDQFYR…HSPGLLGPVL (239 aa)) form the IMD domain. 2 disordered regions span residues 221-332 (EASR…GGAR) and 399-529 (NPLN…PLIR). 3 positions are modified to phosphoserine: Ser231, Ser272, and Ser304. Residues 301–317 (SASSLYSSSTQRSRSNS) are compositionally biased toward low complexity. Residues 321 to 331 (RPGGGGGGGGA) are compositionally biased toward gly residues. Residues 329 to 392 (GGARRVRALV…PEAYVKPLDE (64 aa)) form the SH3 domain. The segment covering 439 to 459 (GNSTASSDYWDGQSRSRTPSH) has biased composition (polar residues). Positions 473–484 (PSSRRSSMGSMG) are enriched in low complexity. Residues Ser479 and Ser482 each carry the phosphoserine modification.

Its subcellular location is the cell membrane. It is found in the cell junction. The protein localises to the cytoplasmic vesicle membrane. Phosphoinositides-binding protein that induces the formation of planar or gently curved membrane structures. Binds to phosphoinositides, including to phosphatidylinositol 4,5-bisphosphate (PtdIns(4,5)P2) headgroups. There seems to be no clear preference for a specific phosphoinositide. In Bos taurus (Bovine), this protein is BAR/IMD domain-containing adapter protein 2-like 2 (BAIAP2L2).